We begin with the raw amino-acid sequence, 529 residues long: Ribonuclease Y (529 aa).

The helical transmembrane segment at 4–24 (GLIYISLEVLVACLITALVMY) threads the bilayer. The KH domain maps to 216-297 (LTTRIALPCS…NRIEEVYHRV (82 aa)). Positions 342–435 (ALQHSKEVAL…VCAADALSAG (94 aa)) constitute an HD domain.

It belongs to the RNase Y family.

The protein resides in the cell membrane. In terms of biological role, endoribonuclease that initiates mRNA decay. The polypeptide is Ribonuclease Y (Helicobacter pylori (strain ATCC 700392 / 26695) (Campylobacter pylori)).